Here is a 243-residue protein sequence, read N- to C-terminus: DNA repair protein RecO (243 aa).

This sequence belongs to the RecO family.

In terms of biological role, involved in DNA repair and RecF pathway recombination. This chain is DNA repair protein RecO, found in Hyphomonas neptunium (strain ATCC 15444).